The sequence spans 347 residues: NADH-ubiquinone oxidoreductase chain 2 (347 aa).

Transmembrane regions (helical) follow at residues 1-21 (MNPI…TIVM), 25-45 (HWLT…PMLM), 59-79 (YFLT…INLM), 96-116 (IILT…FWVP), 148-168 (IINL…GGWG), 178-198 (IMAY…IYNP), 200-220 (LTML…MLLI), 237-257 (MPLI…LPPL), 274-294 (NSII…YFYM), and 326-346 (LSPL…MMIL).

This sequence belongs to the complex I subunit 2 family. As to quaternary structure, core subunit of respiratory chain NADH dehydrogenase (Complex I) which is composed of 45 different subunits. Interacts with TMEM242.

The protein resides in the mitochondrion inner membrane. The catalysed reaction is a ubiquinone + NADH + 5 H(+)(in) = a ubiquinol + NAD(+) + 4 H(+)(out). Its function is as follows. Core subunit of the mitochondrial membrane respiratory chain NADH dehydrogenase (Complex I) which catalyzes electron transfer from NADH through the respiratory chain, using ubiquinone as an electron acceptor. Essential for the catalytic activity and assembly of complex I. This is NADH-ubiquinone oxidoreductase chain 2 from Gardnerycteris crenulata (Striped hairy-nosed bat).